A 743-amino-acid polypeptide reads, in one-letter code: Beta-galactosidase (743 aa).

Glu388 (proton donor) is an active-site residue. Glu453 acts as the Nucleophile in catalysis.

The protein belongs to the glycosyl hydrolase 2 family. Homodimer.

The enzyme catalyses Hydrolysis of terminal non-reducing beta-D-galactose residues in beta-D-galactosides.. In terms of biological role, beta-galactosidase. The sequence is that of Beta-galactosidase (lacZ) from Thermoanaerobacter pseudethanolicus (strain ATCC 33223 / 39E) (Clostridium thermohydrosulfuricum).